A 96-amino-acid chain; its full sequence is Small ribosomal subunit protein bS18 (96 aa).

Belongs to the bacterial ribosomal protein bS18 family. In terms of assembly, part of the 30S ribosomal subunit. Forms a tight heterodimer with protein bS6.

In terms of biological role, binds as a heterodimer with protein bS6 to the central domain of the 16S rRNA, where it helps stabilize the platform of the 30S subunit. This Gluconobacter oxydans (strain 621H) (Gluconobacter suboxydans) protein is Small ribosomal subunit protein bS18.